The sequence spans 243 residues: NAD-dependent protein deacetylase (243 aa).

The region spanning 1 to 243 (MKHDLETLKH…VSVVKSLMTE (243 aa)) is the Deacetylase sirtuin-type domain. Positions 24, 35, 36, 105, 107, 108, and 123 each coordinate NAD(+). Residue Phe35 coordinates nicotinamide. Residues Ile107 and Asp108 each contribute to the nicotinamide site. Residue His123 is the Proton acceptor of the active site. Zn(2+) contacts are provided by Cys131, Cys134, Cys151, and Cys154. 4 residues coordinate NAD(+): Ser192, Ser193, Asn215, and Asp232.

Belongs to the sirtuin family. Class U subfamily. Zn(2+) is required as a cofactor.

Its subcellular location is the cytoplasm. The enzyme catalyses N(6)-acetyl-L-lysyl-[protein] + NAD(+) + H2O = 2''-O-acetyl-ADP-D-ribose + nicotinamide + L-lysyl-[protein]. In terms of biological role, NAD-dependent protein deacetylase which modulates the activities of several enzymes which are inactive in their acetylated form. This Staphylococcus aureus (strain NCTC 8325 / PS 47) protein is NAD-dependent protein deacetylase.